Reading from the N-terminus, the 235-residue chain is Putative N-acetylmannosamine-6-phosphate 2-epimerase (235 aa).

Belongs to the NanE family.

It catalyses the reaction an N-acyl-D-glucosamine 6-phosphate = an N-acyl-D-mannosamine 6-phosphate. Its pathway is amino-sugar metabolism; N-acetylneuraminate degradation; D-fructose 6-phosphate from N-acetylneuraminate: step 3/5. Its function is as follows. Converts N-acetylmannosamine-6-phosphate (ManNAc-6-P) to N-acetylglucosamine-6-phosphate (GlcNAc-6-P). This chain is Putative N-acetylmannosamine-6-phosphate 2-epimerase, found in Enterobacter sp. (strain 638).